Here is a 172-residue protein sequence, read N- to C-terminus: Large ribosomal subunit protein uL10 (172 aa).

Belongs to the universal ribosomal protein uL10 family. Part of the ribosomal stalk of the 50S ribosomal subunit. The N-terminus interacts with L11 and the large rRNA to form the base of the stalk. The C-terminus forms an elongated spine to which L12 dimers bind in a sequential fashion forming a multimeric L10(L12)X complex.

In terms of biological role, forms part of the ribosomal stalk, playing a central role in the interaction of the ribosome with GTP-bound translation factors. The chain is Large ribosomal subunit protein uL10 (rplJ) from Liberibacter africanus (Citrus greening disease).